Here is a 146-residue protein sequence, read N- to C-terminus: Large ribosomal subunit protein uL15 (146 aa).

The tract at residues 1-57 (MKLHELKPAQGSRKTRNRVGRGSSSGNGKTAGRGQKGQKARSGGNIRSGFEGGQTPL) is disordered. Gly residues predominate over residues 23-35 (SSSGNGKTAGRGQ).

Belongs to the universal ribosomal protein uL15 family. In terms of assembly, part of the 50S ribosomal subunit.

Binds to the 23S rRNA. This Streptococcus mutans serotype c (strain ATCC 700610 / UA159) protein is Large ribosomal subunit protein uL15.